A 1505-amino-acid polypeptide reads, in one-letter code: Actin cytoskeleton-regulatory complex protein PAN1 (1505 aa).

The segment at methionine 1–leucine 30 is disordered. Residues aspartate 85–phenylalanine 174 enclose the EH 1 domain. Residues leucine 118–alanine 153 form the EF-hand 1 domain. Composition is skewed to polar residues over residues alanine 364–phenylalanine 393 and alanine 403–valine 413. Disordered regions lie at residues alanine 364–glutamine 416 and leucine 422–tryptophan 441. The EH 2 domain occupies glutamate 492–threonine 581. The region spanning leucine 525–arginine 560 is the EF-hand 2 domain. The segment covering serine 588–lysine 604 has biased composition (polar residues). Residues serine 588 to aspartate 620 are disordered. A coiled-coil region spans residues arginine 677 to aspartate 752. Disordered regions lie at residues glutamate 867–threonine 927 and glutamate 948–leucine 1505. Residues alanine 872–alanine 885 show a composition bias toward polar residues. Composition is skewed to basic and acidic residues over residues lysine 960–proline 980, serine 1034–tyrosine 1050, and serine 1069–lysine 1079. Polar residues predominate over residues glutamine 1086–proline 1096. The segment covering arginine 1109–glutamate 1123 has biased composition (basic and acidic residues). A compositionally biased stretch (low complexity) spans alanine 1133–proline 1175. Residues valine 1193–threonine 1208 are compositionally biased toward polar residues. Over residues aspartate 1216–glutamate 1225 the composition is skewed to acidic residues. Over residues proline 1261–methionine 1280 the composition is skewed to basic and acidic residues. The span at glutamate 1283 to serine 1319 shows a compositional bias: polar residues. Residues alanine 1321–glutamate 1330 are compositionally biased toward low complexity. Residues serine 1331 to proline 1453 show a composition bias toward pro residues. The span at leucine 1454–alanine 1472 shows a compositional bias: low complexity. Residues asparagine 1474–valine 1491 form the WH2 domain.

This sequence belongs to the PAN1 family. Component of the PAN1 actin cytoskeleton-regulatory complex.

The protein resides in the cell membrane. Its subcellular location is the endosome membrane. It is found in the cytoplasm. The protein localises to the cytoskeleton. It localises to the actin patch. Component of the PAN1 actin cytoskeleton-regulatory complex required for the internalization of endosomes during actin-coupled endocytosis. The complex links the site of endocytosis to the cell membrane-associated actin cytoskeleton. Mediates uptake of external molecules and vacuolar degradation of plasma membrane proteins. Plays a role in the proper organization of the cell membrane-associated actin cytoskeleton and promotes its destabilization. The protein is Actin cytoskeleton-regulatory complex protein PAN1 (PAN1) of Lodderomyces elongisporus (strain ATCC 11503 / CBS 2605 / JCM 1781 / NBRC 1676 / NRRL YB-4239) (Yeast).